Here is a 2286-residue protein sequence, read N- to C-terminus: Non-reducing polyketide synthase fsr1 (2286 aa).

The segment at 7 to 342 (LYLFGDQTFD…IYTALKKTSL (336 aa)) is N-terminal acylcarrier protein transacylase domain (SAT). A Ketosynthase family 3 (KS3) domain is found at 368–805 (KPKLAIVAMS…GGNSALLIQD (438 aa)). Residues cysteine 540, histidine 675, and histidine 722 each act as for beta-ketoacyl synthase activity in the active site. Residues 905–1195 (VFTFTGQGAQ…GMVKPTLGQQ (291 aa)) are acyl/malonyl transferases. Serine 996 acts as the For acyl/malonyl transferase activity in catalysis. The interval 1285–1417 (HSVVEESGDS…CVVLFKDRSH (133 aa)) is N-terminal hotdog fold. Residues 1285 to 1591 (HSVVEESGDS…IQGVPRRVLK (307 aa)) form the PKS/mFAS DH domain. The product template (PT) domainn stretch occupies residues 1296-1588 (KTGIVVEADI…QIAIQGVPRR (293 aa)). The Proton acceptor; for dehydratase activity role is filled by histidine 1317. The tract at residues 1444 to 1591 (SARFNRPMAY…IQGVPRRVLK (148 aa)) is C-terminal hotdog fold. Catalysis depends on aspartate 1504, which acts as the Proton donor; for dehydratase activity. The tract at residues 1600–1639 (KKGQPQRQTQDKPRNTPSQTKDSTPKPAQNKPAAKVEPPK) is disordered. The Carrier 1 domain maps to 1637–1712 (PPKFSTAIRI…DLRAFLGADE (76 aa)). Serine 1671 is subject to O-(pantetheine 4'-phosphoryl)serine. The segment at 1716–1735 (ESSSSAASDSGRDTTTTGSA) is disordered. Positions 1748–1823 (EVEFERALEI…DLKTMLAREM (76 aa)) constitute a Carrier 2 domain. Serine 1782 bears the O-(pantetheine 4'-phosphoryl)serine mark. The reductase (R) domain stretch occupies residues 1897-2145 (VTGASGGLGS…NWTPVNDIAD (249 aa)).

Its pathway is polyketide biosynthesis. In terms of biological role, non-reducing polyketide synthase; part of the gene cluster that mediates the biosynthesis of fusarubins, highly pigmented naphthoquinones responsible for the coloration of the fruiting bodies. The non-reducing polyketide synthase FSR1 is responsible for the condensation of seven acetyl-CoA units to yield a haptaketide. After rings A and B are formed by aldol-type cyclization, the PKS-derived product is released as 6-O-demethylfusarubinaldehyde. Then, two hydroxyl groups at C-5 and C-10 are incorporated by FSR3, and simultaneously hydroxyl groups at C-6 and C-8 are methylated by FSR2. The aldehyde is, on the one hand, reduced by FSR3 to 8-O-methylfusarubin alcohol, which equilibrates mainly with 8-O-methylfusarubin and only small amounts of 8-O-methylnectriafurone. On the other hand, the aldehyde can be oxidized to form 8-O-methylfusarubinic acid, a reaction driven by FSR3 equilibrating with 8-O-methylfusarubinlactone, finally resulting in 8-O-methylanhydrofusarubinlactol after a further reduction step and loss of water. 8-O-Methylfusarubinic acid can also undergo decarboxylation, resulting in 8-O-methyl-13-hydroxynorjavanicin after another hydroxylation step at C-13. Both steps are most likely also accomplished by FSR3. No enzymatic function has been determined so far for either FSR4 and FSR5. Their deletion does not alter the product spectrum, but the possibility that they catalyze specific enzymatic steps during perithecium development cannot be ruled out. FSR4 might possess a regulatory function in the biosynthesis of fusarubins. This is Non-reducing polyketide synthase fsr1 from Gibberella fujikuroi (strain CBS 195.34 / IMI 58289 / NRRL A-6831) (Bakanae and foot rot disease fungus).